We begin with the raw amino-acid sequence, 141 residues long: Large ribosomal subunit protein uL11 (141 aa).

It belongs to the universal ribosomal protein uL11 family. As to quaternary structure, part of the ribosomal stalk of the 50S ribosomal subunit. Interacts with L10 and the large rRNA to form the base of the stalk. L10 forms an elongated spine to which L12 dimers bind in a sequential fashion forming a multimeric L10(L12)X complex. In terms of processing, one or more lysine residues are methylated.

Its function is as follows. Forms part of the ribosomal stalk which helps the ribosome interact with GTP-bound translation factors. The chain is Large ribosomal subunit protein uL11 from Levilactobacillus brevis (strain ATCC 367 / BCRC 12310 / CIP 105137 / JCM 1170 / LMG 11437 / NCIMB 947 / NCTC 947) (Lactobacillus brevis).